We begin with the raw amino-acid sequence, 613 residues long: Chaperone protein DnaK (613 aa).

Thr-173 is modified (phosphothreonine; by autocatalysis). Positions 577–613 (AKQAQAQQEGGAEGAQKADDNVVDAEYEEVNDDQEKK) are disordered. A compositionally biased stretch (acidic residues) spans 597–613 (NVVDAEYEEVNDDQEKK).

It belongs to the heat shock protein 70 family.

Its function is as follows. Acts as a chaperone. This chain is Chaperone protein DnaK, found in Bacillus pumilus (strain SAFR-032).